The primary structure comprises 106 residues: Class II hydrophobin 6 (106 aa).

The first 16 residues, 1-16, serve as a signal peptide directing secretion; it reads MQFFTVATLFLATAFA. Intrachain disulfides connect Cys36/Cys86, Cys47/Cys77, Cys48/Cys60, and Cys87/Cys98.

Belongs to the cerato-ulmin hydrophobin family. As to quaternary structure, homodimer. Homodimers further self-assemble to form highly ordered films at water-air interfaces through intermolecular interactions.

The protein resides in the secreted. The protein localises to the cell wall. Functionally, aerial growth, conidiation, and dispersal of filamentous fungi in the environment rely upon a capability of their secreting small amphipathic proteins called hydrophobins (HPBs) with low sequence identity. Class I can self-assemble into an outermost layer of rodlet bundles on aerial cell surfaces, conferring cellular hydrophobicity that supports fungal growth, development and dispersal; whereas Class II form highly ordered films at water-air interfaces through intermolecular interactions but contribute nothing to the rodlet structure. HFB2-6 is a class II hydrophobin that has a function in root colonization. Acts as an effector in poplar by up-regulating the expression of genes related to both the jasmonic acid and salicylic acid signal transduction pathways, which not only causes induced systemic resistance (ISR), but also systemic acquired resistance (SAR), giving poplar broad-spectrum resistance to pathogens. Also induces genes related to auxin signal transduction to promote poplar growth. Plays roles in interactions with both biotic and abiotic environmental conditions such as the presence of the pathogen Alternaria alternata or nutrient starvation conditions. The protein is Class II hydrophobin 6 of Trichoderma asperellum (strain ATCC 204424 / CBS 433.97 / NBRC 101777).